Here is a 470-residue protein sequence, read N- to C-terminus: Putative multidrug resistance protein MdtD (470 aa).

Residues 1–11 (MTELPDNTRWQ) lie on the Periplasmic side of the membrane. The chain crosses the membrane as a helical span at residues 12 to 32 (LWIVAFGFFMQSLDTTIVNTA). The Cytoplasmic portion of the chain corresponds to 33-48 (LPSMAKSLGESPLHMH). The helical transmembrane segment at 49–69 (MVVVSYVLTVAVMLPASGWLA) threads the bilayer. Residues 70-76 (DKIGVRN) are Periplasmic-facing. Residues 77-97 (IFFAAIVLFTLGSLFCALSGT) form a helical membrane-spanning segment. At 98–101 (LNQL) the chain is on the cytoplasmic side. A helical transmembrane segment spans residues 102–124 (VLARVLQGVGGAMMVPVGRLTVM). The Periplasmic portion of the chain corresponds to 125–137 (KIVPRAQYMAAMT). A helical membrane pass occupies residues 138–158 (FVTLPGQIGPLLGPALGGVLV). Topologically, residues 159 to 164 (EYASWH) are cytoplasmic. Residues 165 to 185 (WIFLINIPVGIVGAMATFMLM) form a helical membrane-spanning segment. The Periplasmic portion of the chain corresponds to 186 to 196 (PNYTIETRRFD). The chain crosses the membrane as a helical span at residues 197 to 217 (LPGFLLLAIGMAVLTLALDGS). Residues 218–224 (KSMGISP) are Cytoplasmic-facing. Residues 225 to 245 (WTLAGLAAGGAAAILLYLFHA) form a helical membrane-spanning segment. Topologically, residues 246 to 262 (KKSSGALFSLRLFRTPT) are periplasmic. Residues 263-283 (FSLGLLGSFAGRIGSGMLPFM) traverse the membrane as a helical segment. Residues 284 to 285 (TP) lie on the Cytoplasmic side of the membrane. A helical membrane pass occupies residues 286–306 (VFLQIGLGFSPFHAGLMMIPM). The Periplasmic segment spans residues 307 to 341 (VLGSMGMKRIVVQIVNRFGYRRVLVATTLGLALVS). Residues 342-362 (LLFMSVALLGWYYLLPLVLLL) traverse the membrane as a helical segment. The Cytoplasmic segment spans residues 363–395 (QGMVNSARFSSMNTLTLKDLPDTLASSGNSLLS). Residues 396 to 416 (MIMQLSMSIGVTIAGMLLGMF) form a helical membrane-spanning segment. Topologically, residues 417 to 430 (GQQHIGIDSSATHH) are periplasmic. Residues 431–451 (VFMYTWLCMAVIIALPAIIFA) traverse the membrane as a helical segment. The Cytoplasmic segment spans residues 452–470 (RVPNDTQQNMVISRRKRSL).

This sequence belongs to the major facilitator superfamily. TCR/Tet family.

The protein localises to the cell inner membrane. This chain is Putative multidrug resistance protein MdtD, found in Salmonella paratyphi A (strain ATCC 9150 / SARB42).